The primary structure comprises 812 residues: Toll-like receptor 10 (812 aa).

Positions 1-19 (MRYIRSIYIFCSIVTSVRS) are cleaved as a signal peptide. The Extracellular portion of the chain corresponds to 20–577 (GASELPEERE…VHLPEISCNT (558 aa)). 5 LRR repeats span residues 24–46 (LPEE…PEGL), 49–70 (ITTT…DFRS), 73–94 (KLKV…TFEF), 97–118 (ELSY…SLAG), and 119–139 (LRHL…VETG). N-linked (GlcNAc...) asparagine glycosylation is present at Asn-33. Asn-140 is a glycosylation site (N-linked (GlcNAc...) asparagine). The stretch at 143 to 166 (HLETLGLSGAKIQKSDFQKIAHLQ) is one LRR 6 repeat. Residue Asn-189 is glycosylated (N-linked (GlcNAc...) asparagine). 4 LRR repeats span residues 296–321 (SNTV…ESIY), 325–348 (TKMD…PMYP), 350–373 (RFQY…IQLP), and 374–395 (HLKT…SHFA). Asn-331 carries an N-linked (GlcNAc...) asparagine glycan. An N-linked (GlcNAc...) asparagine glycan is attached at Asn-397. 5 LRR repeats span residues 399–420 (SLRH…NCLW), 423–443 (TLVT…GCLP), 445–467 (NIQI…THLT), 468–489 (SLRE…SHFR), and 490–510 (RLLV…DFFQ). Asn-428 carries N-linked (GlcNAc...) asparagine glycosylation. Residues 523-577 (NPFRCTCELRDFIQLGKYSEGMMVGWSDSYICEYPLNLKGTQLKDVHLPEISCNT) enclose the LRRCT domain. The helical transmembrane segment at 578 to 598 (GLLIVTIVVVMLVLGMAVAFC) threads the bilayer. Topologically, residues 599-812 (CLHFDLPWYL…AISLIRTDCL (214 aa)) are cytoplasmic. Residues 633 to 776 (VQFHVFISYS…LFWANLRAAL (144 aa)) enclose the TIR domain.

Belongs to the Toll-like receptor family. As to quaternary structure, binds MYD88 via their respective TIR domains.

The protein localises to the membrane. In terms of biological role, participates in the innate immune response to microbial agents. Acts via MYD88 and TRAF6, leading to NF-kappa-B activation, cytokine secretion and the inflammatory response. This Bos taurus (Bovine) protein is Toll-like receptor 10 (TLR10).